A 369-amino-acid polypeptide reads, in one-letter code: Deacetylase EF_0837 (369 aa).

His58, His60, Lys152, His186, His209, and Asp270 together coordinate Zn(2+). Lys152 is modified (N6-carboxylysine).

The protein belongs to the metallo-dependent hydrolases superfamily. Atu3266/EF_0837 deacetylase family. The cofactor is Zn(2+).

In terms of biological role, esterase that can catalyze the deacetylation of acetyl-(R)-mandelate, but with very low efficiency (in vitro). This Enterococcus faecalis (strain ATCC 700802 / V583) protein is Deacetylase EF_0837.